The sequence spans 245 residues: 1-(5-phosphoribosyl)-5-[(5-phosphoribosylamino)methylideneamino] imidazole-4-carboxamide isomerase (245 aa).

Asp-7 functions as the Proton acceptor in the catalytic mechanism. Asp-129 serves as the catalytic Proton donor.

It belongs to the HisA/HisF family.

It is found in the cytoplasm. It carries out the reaction 1-(5-phospho-beta-D-ribosyl)-5-[(5-phospho-beta-D-ribosylamino)methylideneamino]imidazole-4-carboxamide = 5-[(5-phospho-1-deoxy-D-ribulos-1-ylimino)methylamino]-1-(5-phospho-beta-D-ribosyl)imidazole-4-carboxamide. Its pathway is amino-acid biosynthesis; L-histidine biosynthesis; L-histidine from 5-phospho-alpha-D-ribose 1-diphosphate: step 4/9. This chain is 1-(5-phosphoribosyl)-5-[(5-phosphoribosylamino)methylideneamino] imidazole-4-carboxamide isomerase, found in Shewanella halifaxensis (strain HAW-EB4).